Reading from the N-terminus, the 610-residue chain is MAFTPSSPPSPAADASQRPSRYPGEDTTPTSRREILGWYAYGIAAEVFAVCGVGSFLPLTLEQLARERGVLKSSHLPCVGPDAPTSSLANGTAPALLRRDGADNDQCVVGLLGLEINTASFAMYTFSLAVLVQALTLISFSALADYENNRKTLLLAFGFIGSATSMLFVFVAPPVFTFGAILVIIGVTCLGSSFVVLNSFLPVLVANDPSIQGASKEADEELHTLNENGQFEPRDSFSERNPEFESQYTPGIGLGSKPSTNATSPELQLSTRISSKGVGLGYCAAVLVQILSIGLLFALSKTSLPKVSGTLPLRFVLLLVGIWWFSFTMVTRRWLRNRPGPPLSTTTTGGHTNKWRVWLRLVGFAWKSLWKTVKIAVQLREVRVFLVAWFLLSDAIATVSGTAILFARTELKMSTTLVGCLSITATLSGMTGAFLWPVVSRRFKLKSSHTIMLCIALFEIIPLYGMLAYIPLFKKWGVIGLQQPWEIFPLAIVHGIVSGGLSSYCRSFFGLLIPPGSEAAFYALYAATDKGSSVIGPAIVGMLIDATGQVRSGFFFIAILIVLPIPLVWMVNAEKGRMEGVAMAERMAKGQESETGEPGEEAEGLLARGA.

The segment covering 1 to 11 has biased composition (pro residues); that stretch reads MAFTPSSPPSP. The interval 1-29 is disordered; that stretch reads MAFTPSSPPSPAADASQRPSRYPGEDTTP. A helical transmembrane segment spans residues 35 to 55; it reads ILGWYAYGIAAEVFAVCGVGS. The N-linked (GlcNAc...) asparagine glycan is linked to Asn-90. The next 3 helical transmembrane spans lie at 120–140, 152–171, and 189–209; these read SFAMYTFSLAVLVQALTLISF, TLLLAFGFIGSATSMLFVFV, and CLGSSFVVLNSFLPVLVANDP. The tract at residues 229 to 265 is disordered; it reads GQFEPRDSFSERNPEFESQYTPGIGLGSKPSTNATSP. Residues 232-243 are compositionally biased toward basic and acidic residues; that stretch reads EPRDSFSERNPE. An N-linked (GlcNAc...) asparagine glycan is attached at Asn-261. 8 helical membrane passes run 278 to 298, 310 to 330, 384 to 404, 418 to 438, 453 to 473, 488 to 510, 522 to 544, and 553 to 573; these read VGLGYCAAVLVQILSIGLLFA, TLPLRFVLLLVGIWWFSFTMV, VFLVAWFLLSDAIATVSGTAI, VGCLSITATLSGMTGAFLWPV, LCIALFEIIPLYGMLAYIPLF, FPLAIVHGIVSGGLSSYCRSFFG, YALYAATDKGSSVIGPAIVGMLI, and GFFFIAILIVLPIPLVWMVNA. A disordered region spans residues 588–610; sequence AKGQESETGEPGEEAEGLLARGA. A compositionally biased stretch (acidic residues) spans 594-603; the sequence is ETGEPGEEAE.

This sequence belongs to the ATG22 family.

The protein resides in the vacuole membrane. Functionally, vacuolar effluxer which mediate the efflux of amino acids resulting from autophagic degradation. The release of autophagic amino acids allows the maintenance of protein synthesis and viability during nitrogen starvation. This is Autophagy-related protein 22-1 (atg22-1) from Aspergillus terreus (strain NIH 2624 / FGSC A1156).